The sequence spans 545 residues: Glucose-6-phosphate isomerase (545 aa).

Glu-351 acts as the Proton donor in catalysis. Residues His-382 and Lys-510 contribute to the active site.

Belongs to the GPI family.

The protein resides in the cytoplasm. It carries out the reaction alpha-D-glucose 6-phosphate = beta-D-fructose 6-phosphate. It participates in carbohydrate biosynthesis; gluconeogenesis. The protein operates within carbohydrate degradation; glycolysis; D-glyceraldehyde 3-phosphate and glycerone phosphate from D-glucose: step 2/4. In terms of biological role, catalyzes the reversible isomerization of glucose-6-phosphate to fructose-6-phosphate. This Shewanella baltica (strain OS155 / ATCC BAA-1091) protein is Glucose-6-phosphate isomerase.